The chain runs to 233 residues: Histone H1-I (233 aa).

Disordered regions lie at residues 1–55 (MSDS…HPPV) and 115–233 (TGAS…KKSK). A compositionally biased stretch (low complexity) spans 17–29 (KAASPAKSPAKSP). In terms of domain architecture, H15 spans 51-125 (THPPVSEMVV…GASGSFKMPP (75 aa)). Composition is skewed to basic and acidic residues over residues 128–137 (KKVDRPESAP) and 146–155 (TRVERKEKKV). 2 stretches are compositionally biased toward basic residues: residues 172 to 213 (AAKK…KPTP) and 223 to 233 (AAARKPAKKSK).

It belongs to the histone H1/H5 family.

The protein localises to the nucleus. Its subcellular location is the chromosome. Histones H1 are necessary for the condensation of nucleosome chains into higher-order structures. This Glyptotendipes barbipes (Midge) protein is Histone H1-I.